Here is a 485-residue protein sequence, read N- to C-terminus: NADH-quinone oxidoreductase subunit N (485 aa).

The next 14 membrane-spanning stretches (helical) occupy residues 8 to 28 (LIALLPLLIVGLTVVVVMLSI), 35 to 55 (FLNATLSVIGLNAALVSLWFV), 71 to 91 (GFAMLYTGLVLLASLATCTFA), 105 to 125 (FYLLVLIAALGGILLANANHL), 127 to 147 (SLFLGIELISLPLFGLVGYAF), 159 to 179 (YTILSAAASSFLLFGMALVYA), 203 to 223 (LLAGFGLMIVGLGFKLSLVPF), 235 to 255 (PAPVSTFLATASKIAIFGVVM), 271 to 291 (VVLAIIAFASIIFGNLMALSQ), 297 to 317 (LLGYSSISHLGYLLVALIALQ), 326 to 346 (VGVYLAGYLFSSLGAFGVVSL), 373 to 393 (AAVMTVMMLSLAGIPMTLGFI), 408 to 430 (WWLVGAVVVGSAIGLYYYLRVAV), and 455 to 475 (IVVLISALLVLVLGIWPQPLI).

It belongs to the complex I subunit 2 family. In terms of assembly, NDH-1 is composed of 13 different subunits. Subunits NuoA, H, J, K, L, M, N constitute the membrane sector of the complex.

The protein resides in the cell inner membrane. It carries out the reaction a quinone + NADH + 5 H(+)(in) = a quinol + NAD(+) + 4 H(+)(out). Functionally, NDH-1 shuttles electrons from NADH, via FMN and iron-sulfur (Fe-S) centers, to quinones in the respiratory chain. The immediate electron acceptor for the enzyme in this species is believed to be ubiquinone. Couples the redox reaction to proton translocation (for every two electrons transferred, four hydrogen ions are translocated across the cytoplasmic membrane), and thus conserves the redox energy in a proton gradient. This chain is NADH-quinone oxidoreductase subunit N, found in Escherichia coli O7:K1 (strain IAI39 / ExPEC).